A 152-amino-acid chain; its full sequence is UPF0225 protein YchJ (152 aa).

This sequence belongs to the UPF0225 family.

The sequence is that of UPF0225 protein YchJ from Escherichia coli O127:H6 (strain E2348/69 / EPEC).